Here is an 81-residue protein sequence, read N- to C-terminus: MSDPFANPDQTLDTQGLRCPEPVMMVRKTVRHMQDGETLLIIADDPATTRDIPGFCRFMEHTLVAQAVDALPYQYLLKKGL.

C19 functions as the Cysteine persulfide intermediate in the catalytic mechanism.

This sequence belongs to the sulfur carrier protein TusA family. In terms of assembly, interacts with IscS.

It is found in the cytoplasm. It functions in the pathway tRNA modification. Functionally, sulfur carrier protein involved in sulfur trafficking in the cell. Part of a sulfur-relay system required for 2-thiolation during synthesis of 2-thiouridine of the modified wobble base 5-methylaminomethyl-2-thiouridine (mnm(5)s(2)U) in tRNA. Interacts with IscS and stimulates its cysteine desulfurase activity. Accepts an activated sulfur from IscS, which is then transferred to TusD, and thus determines the direction of sulfur flow from IscS to 2-thiouridine formation. Also appears to be involved in sulfur transfer for the biosynthesis of molybdopterin. The polypeptide is Sulfur carrier protein TusA (Erwinia tasmaniensis (strain DSM 17950 / CFBP 7177 / CIP 109463 / NCPPB 4357 / Et1/99)).